A 195-amino-acid polypeptide reads, in one-letter code: Dephospho-CoA kinase (195 aa).

Residues 2-195 (IIGLTGGIGV…DIVDSLSLSS (194 aa)) form the DPCK domain. 10-15 (GVGKSF) serves as a coordination point for ATP.

This sequence belongs to the CoaE family.

The protein resides in the cytoplasm. It carries out the reaction 3'-dephospho-CoA + ATP = ADP + CoA + H(+). Its pathway is cofactor biosynthesis; coenzyme A biosynthesis; CoA from (R)-pantothenate: step 5/5. In terms of biological role, catalyzes the phosphorylation of the 3'-hydroxyl group of dephosphocoenzyme A to form coenzyme A. The polypeptide is Dephospho-CoA kinase (Wolbachia sp. subsp. Brugia malayi (strain TRS)).